The sequence spans 319 residues: Ribosomal large subunit pseudouridine synthase C (319 aa).

Positions Gln-20–Pro-83 constitute an S4 RNA-binding domain. Asp-144 is an active-site residue.

The protein belongs to the pseudouridine synthase RluA family.

It carries out the reaction uridine(955/2504/2580) in 23S rRNA = pseudouridine(955/2504/2580) in 23S rRNA. In terms of biological role, responsible for synthesis of pseudouridine from uracil at positions 955, 2504 and 2580 in 23S ribosomal RNA. The chain is Ribosomal large subunit pseudouridine synthase C from Escherichia coli (strain K12).